Consider the following 551-residue polypeptide: Glucans biosynthesis protein D (551 aa).

Positions 1 to 32 (MDRRRFIKGSMAMAAVCGTSGIASLFSQAAFA) form a signal peptide, tat-type signal.

It belongs to the OpgD/OpgG family. Post-translationally, predicted to be exported by the Tat system. The position of the signal peptide cleavage has not been experimentally proven.

The protein localises to the periplasm. The protein operates within glycan metabolism; osmoregulated periplasmic glucan (OPG) biosynthesis. Its function is as follows. Probably involved in the control of the structural glucose backbone of osmoregulated periplasmic glucans (OPGs). The protein is Glucans biosynthesis protein D (mdoD) of Shigella flexneri.